A 214-amino-acid polypeptide reads, in one-letter code: MQRILDLRRIYALTVDPRTLHGSVWKVDFKVVRQELIRYIKDLALFEGEFILSSGQKSSYYIDLRRVSLDCRAAPIIGKVMFDLICDLQDVDAIGGLTMGADPIACAIMHYAASVGRSYNAFVVRKQKKTHGLARLIEGPDIRGKRVVIVEDTSTTGNSPITAARRAEETGATVAAIAVMVDRETGARQAIEKAGYSYYAALRVTDILDRGTAD.

5-phospho-alpha-D-ribose 1-diphosphate is bound by residues Arg-125, Lys-126, Lys-129, His-131, and 151–159 (EDTSTTGNS). Orotate-binding residues include Thr-155 and Arg-183.

It belongs to the purine/pyrimidine phosphoribosyltransferase family. PyrE subfamily. Homodimer. It depends on Mg(2+) as a cofactor.

It carries out the reaction orotidine 5'-phosphate + diphosphate = orotate + 5-phospho-alpha-D-ribose 1-diphosphate. Its pathway is pyrimidine metabolism; UMP biosynthesis via de novo pathway; UMP from orotate: step 1/2. Its function is as follows. Catalyzes the transfer of a ribosyl phosphate group from 5-phosphoribose 1-diphosphate to orotate, leading to the formation of orotidine monophosphate (OMP). The sequence is that of Orotate phosphoribosyltransferase from Tropheryma whipplei (strain Twist) (Whipple's bacillus).